The sequence spans 504 residues: Carnosic acid synthase (504 aa).

The helical transmembrane segment at 4-24 (FIILSLAFIAAWVVYSRWSEY) threads the bilayer. A heme-binding site is contributed by Cys-447.

It belongs to the cytochrome P450 family. Heme serves as cofactor. Expressed in glandular trichomes of young leaves.

The protein resides in the membrane. It carries out the reaction 11-hydroxyferruginol + 3 reduced [NADPH--hemoprotein reductase] + 3 O2 = carnosate + 3 oxidized [NADPH--hemoprotein reductase] + 4 H2O + 4 H(+). The catalysed reaction is miltiradiene + 2 reduced [NADPH--hemoprotein reductase] + 2 O2 = miltiradien-20-al + 2 oxidized [NADPH--hemoprotein reductase] + 3 H2O + 2 H(+). It catalyses the reaction ferruginol + 3 reduced [NADPH--hemoprotein reductase] + 3 O2 = pisiferate + 3 oxidized [NADPH--hemoprotein reductase] + 4 H2O + 4 H(+). It participates in secondary metabolite biosynthesis; terpenoid biosynthesis. In terms of biological role, monooxygenase involved in the biosynthesis of carnosate, a potent antioxidant labdane-related diterpene natural products. Catalyzes the oxidation of 11-hydroxyferruginol to produce carnosate. Mediates the conversion of miltiradien into miltiradien-20-al. Also involved in the production of pisiferic acid and derivative products from ferruginol. In Rosmarinus officinalis (Rosemary), this protein is Carnosic acid synthase.